Consider the following 2464-residue polypeptide: Highly reducing polyketide synthase xilA (2464 aa).

A Ketosynthase family 3 (KS3) domain is found at 9–437; it reads HDPIALVGIG…GTNGHCIIDH (429 aa). Catalysis depends on for beta-ketoacyl synthase activity residues cysteine 182, histidine 318, and histidine 360. Over residues 461–487 the composition is skewed to low complexity; the sequence is QNGINGTNGTNGTNGTNGTNGTNGTNG. The interval 461 to 495 is disordered; that stretch reads QNGINGTNGTNGTNGTNGTNGTNGTNGHHNPKTEA. A Malonyl-CoA:ACP transacylase (MAT) domain is found at 589-911; it reads FIFTGQGAQW…LKRNEDAQRL (323 aa). An N-terminal hotdog fold region spans residues 983–1121; it reads HDLLGSKVPG…GQIKIEVSTF (139 aa). A PKS/mFAS DH domain is found at 983-1286; sequence HDLLGSKVPG…FTSLNNEQES (304 aa). The active-site Proton acceptor; for dehydratase activity is the histidine 1015. The interval 1133–1286 is C-terminal hotdog fold; the sequence is GRLVDAQTWY…FTSLNNEQES (154 aa). Aspartate 1199 functions as the Proton donor; for dehydratase activity in the catalytic mechanism. A methyltransferase (CMeT) domain region spans residues 1282–1490; the sequence is NEQESTSTGD…TEPAHHSTIT (209 aa). Positions 1716–2028 constitute an Enoyl reductase (ER) domain; the sequence is GILTSLYFKP…KGTHIGKMVI (313 aa). The Ketoreductase (KR) domain occupies 2052–2231; that stretch reads ANYILVGGMS…ATTVSLGFIN (180 aa). One can recognise a Carrier domain in the interval 2383–2461; that stretch reads ETVTFVTDAI…SIAQVIVEEA (79 aa). An O-(pantetheine 4'-phosphoryl)serine modification is found at serine 2420.

It depends on pantetheine 4'-phosphate as a cofactor.

The protein operates within secondary metabolite biosynthesis. In terms of biological role, highly reducing polyketide synthase; part of the gene cluster that mediates the biosynthesis of the 6-methyl-2-pyrone derivative xylariolide D. XilA produces the 5-alkyl-6-methyl-2-pyrone backbone called prexylariolide D via sequential condensations of 4 malonyl-CoA units with one acetyl-CoA starter unit. During the biosynthesis, the linear polyketide chain is branched by the addition of an acetyl unit as the origin of the methyl group at the 2-pyrone ring. Prexylariolide D is then hydroxylated at the side chain by xilC to form the final product, xylariolide D. In Penicillium rubens (strain ATCC 28089 / DSM 1075 / NRRL 1951 / Wisconsin 54-1255) (Penicillium chrysogenum), this protein is Highly reducing polyketide synthase xilA.